The following is a 494-amino-acid chain: Subtilisin-like serine protease EN45_078720 (494 aa).

The N-terminal stretch at 1-16 (MKGFLSLTLLPLLVAA) is a signal peptide. Residues 17–136 (SPVAVNSIHN…IEKDSEVRTM (120 aa)) constitute a propeptide, removed in mature form. The Inhibitor I9 domain maps to 43 to 136 (SYIVVFKKHV…IEKDSEVRTM (94 aa)). One can recognise a Peptidase S8 domain in the interval 146-448 (PWGLARISHR…GGSANYTKIL (303 aa)). IgE-binding stretches follow at residues 180–198 (VIDTGANVKHVDFEGRANW) and 209–231 (EDGNGHGTHCSGTIAGKKFGVAK). Active-site charge relay system residues include Asp-182 and His-214. N-linked (GlcNAc...) asparagine glycosylation is found at Asn-244 and Asn-280. The Charge relay system role is filled by Ser-376. Asn-443 carries an N-linked (GlcNAc...) asparagine glycan. A propeptide spans 454-494 (KAHNAETTVEDRIGGIIDSAEKAFHKELGAIYSEIKDAVSA) (removed in mature form).

The protein belongs to the peptidase S8 family.

Functionally, serine protease. The polypeptide is Subtilisin-like serine protease EN45_078720 (Penicillium chrysogenum (Penicillium notatum)).